The sequence spans 107 residues: UPF0145 protein Memar_1285 (107 aa).

This sequence belongs to the UPF0145 family.

The protein is UPF0145 protein Memar_1285 of Methanoculleus marisnigri (strain ATCC 35101 / DSM 1498 / JR1).